The following is a 431-amino-acid chain: Glutamyl-tRNA reductase (431 aa).

Substrate contacts are provided by residues 49–52 (TCDR), Ser-109, 114–116 (EPH), and Gln-120. Catalysis depends on Cys-50, which acts as the Nucleophile. An NADP(+)-binding site is contributed by 189 to 194 (GTQEMG).

Belongs to the glutamyl-tRNA reductase family. As to quaternary structure, homodimer.

The catalysed reaction is (S)-4-amino-5-oxopentanoate + tRNA(Glu) + NADP(+) = L-glutamyl-tRNA(Glu) + NADPH + H(+). It functions in the pathway porphyrin-containing compound metabolism; protoporphyrin-IX biosynthesis; 5-aminolevulinate from L-glutamyl-tRNA(Glu): step 1/2. It participates in porphyrin-containing compound metabolism; chlorophyll biosynthesis. Functionally, catalyzes the NADPH-dependent reduction of glutamyl-tRNA(Glu) to glutamate 1-semialdehyde (GSA). The polypeptide is Glutamyl-tRNA reductase (Rhodospirillum rubrum (strain ATCC 11170 / ATH 1.1.1 / DSM 467 / LMG 4362 / NCIMB 8255 / S1)).